A 335-amino-acid polypeptide reads, in one-letter code: Endo-1,4-beta-xylanase S20 (335 aa).

Residues 1–22 form the signal peptide; that stretch reads MLRKLVTGALAAALLLSGQSNA. One can recognise a GH11 domain in the interval 39–241; sequence NNKNETGNGN…GSGYVDFTYA (203 aa). N42 and N78 each carry an N-linked (GlcNAc...) asparagine glycan. E134 acts as the Nucleophile in catalysis. The N-linked (GlcNAc...) asparagine glycan is linked to N202. The active-site Proton donor is E228. N-linked (GlcNAc...) asparagine glycosylation occurs at N251. The interval 251-291 is disordered; it reads NASAPSNNNNNNNNNNDNNGNWNNWNNNNNNNNNNNNNNNN. Residues 257–291 show a composition bias toward low complexity; the sequence is NNNNNNNNNNDNNGNWNNWNNNNNNNNNNNNNNNN. Residues 300–335 enclose the CBM1 domain; sequence NCAAIWGQCGGSGYNGPKCCKQGSCKQINQWYSQCQ.

The protein belongs to the glycosyl hydrolase 11 (cellulase G) family.

It localises to the secreted. The enzyme catalyses Endohydrolysis of (1-&gt;4)-beta-D-xylosidic linkages in xylans.. Its pathway is glycan degradation; xylan degradation. Endo-1,4-beta-xylanase involved in the hydrolysis of xylan, a major structural heterogeneous polysaccharide found in plant biomass representing the second most abundant polysaccharide in the biosphere, after cellulose. This chain is Endo-1,4-beta-xylanase S20 (xynS20), found in Neocallimastix patriciarum (Rumen fungus).